A 433-amino-acid polypeptide reads, in one-letter code: C2H2 type master regulator of conidiophore development brlA (433 aa).

Disordered regions lie at residues 23 to 64 (PSEC…SHYH) and 240 to 265 (KTHT…PVSR). The segment covering 30 to 48 (TSSFSPLDSPTPTPTSLYS) has biased composition (low complexity). Positions 240–264 (KTHTPSTPHRSVSMGTPSGSDTPVS) are enriched in polar residues. 2 consecutive C2H2-type zinc fingers follow at residues 321–345 (FKCK…MKSH) and 351–376 (HVCW…TKTH). The tract at residues 391–416 (ETSQDFDPDFRGQLTPDGRPIYGSKL) is disordered.

It localises to the nucleus. Functionally, brlA, abaA and wetA are pivotal regulators of conidiophore development and conidium maturation. They act individually and together to regulate their own expression and that of numerous other sporulation-specific genes. Binds promoters of target genes at brlA response elements (BREs) containing the conserved sequence 5'-(C/A)(A/G)AGGG(G/A)-3'. Is not required for penicillin V production. This is C2H2 type master regulator of conidiophore development brlA from Penicillium rubens (strain ATCC 28089 / DSM 1075 / NRRL 1951 / Wisconsin 54-1255) (Penicillium chrysogenum).